A 210-amino-acid chain; its full sequence is N-(5'-phosphoribosyl)anthranilate isomerase (210 aa).

The protein belongs to the TrpF family.

It catalyses the reaction N-(5-phospho-beta-D-ribosyl)anthranilate = 1-(2-carboxyphenylamino)-1-deoxy-D-ribulose 5-phosphate. It participates in amino-acid biosynthesis; L-tryptophan biosynthesis; L-tryptophan from chorismate: step 3/5. The sequence is that of N-(5'-phosphoribosyl)anthranilate isomerase from Crocosphaera subtropica (strain ATCC 51142 / BH68) (Cyanothece sp. (strain ATCC 51142)).